The chain runs to 249 residues: Small ribosomal subunit protein uS3 (249 aa).

The KH type-2 domain maps to 39 to 107; the sequence is VRAMLKKRLY…EVHLNIVEIR (69 aa). A disordered region spans residues 215–249; that stretch reads LDKRLATESGPAGEGGGRERGDRPDRGDRGRRDRG. Over residues 230–249 the composition is skewed to basic and acidic residues; the sequence is GGRERGDRPDRGDRGRRDRG.

This sequence belongs to the universal ribosomal protein uS3 family. In terms of assembly, part of the 30S ribosomal subunit. Forms a tight complex with proteins S10 and S14.

Its function is as follows. Binds the lower part of the 30S subunit head. Binds mRNA in the 70S ribosome, positioning it for translation. The polypeptide is Small ribosomal subunit protein uS3 (Caulobacter sp. (strain K31)).